Here is a 1121-residue protein sequence, read N- to C-terminus: Cuscuta receptor 1 (1121 aa).

A signal peptide spans 1 to 20 (MGNIKFLLLVFFLIVVVVNG). The Extracellular portion of the chain corresponds to 21–1058 (CWEEERNALL…EESSELEDIQ (1038 aa)). An N-linked (GlcNAc...) asparagine glycan is attached at N91. LRR repeat units lie at residues 98–122 (FKSL…GFSK), 126–152 (LPNL…CWIS), 185–209 (LSNL…ALGE), 210–233 (LRNL…SLKI), 234–259 (FPSL…IIDL), 260–282 (SNLE…KGNK), 284–308 (MTSL…SLKS), and 309–331 (FSSL…IYAL). N-linked (GlcNAc...) asparagine glycosylation occurs at N224. N-linked (GlcNAc...) asparagine glycans are attached at residues N298, N321, and N333. The LRR 9 repeat unit spans residues 334–360 (LSTVEYLYFKGSSLNDNFLPNIGQMTS). N-linked (GlcNAc...) asparagine glycosylation is found at N372 and N406. LRR repeat units lie at residues 383 to 406 (LKYI…CLGN), 407 to 432 (LTSL…IWRR), 433 to 457 (LTSL…QFSD), 459 to 479 (KKLI…EYQN), 507 to 531 (QYDL…LLEN), 556 to 580 (HLHL…MSLA), 581 to 605 (FPKL…ISGI), 607 to 628 (LTIL…LAVV), 630 to 654 (SPQL…EFRP), 655 to 678 (HVLS…VFLS), 680 to 701 (LITL…TRDN), 702 to 725 (RRLL…ICNL), 726 to 749 (KIIN…VSSL), 751 to 772 (LKHI…IFNF), 773 to 796 (SSLI…IGSL), 797 to 820 (SNLN…ICML), 822 to 846 (NLSI…YLTQ), 914 to 938 (LKYM…LGNM), 939 to 961 (SNIH…TFSN), 962 to 986 (LQEI…LLEL), and 988 to 1012 (SLAV…QFGT). 3 N-linked (GlcNAc...) asparagine glycosylation sites follow: N531, N576, and N588. N689 is a glycosylation site (N-linked (GlcNAc...) asparagine). Residue N771 is glycosylated (N-linked (GlcNAc...) asparagine). N-linked (GlcNAc...) asparagine glycosylation is found at N822, N937, N945, N976, N998, N1014, and N1041. The helical transmembrane segment at 1059 to 1079 (CFYIGFVVSFGAILLGLAAAL) threads the bilayer. Topologically, residues 1080–1121 (CLNRHWRRAWFRMIEALMFYCYYFVLDNIVTPIKSRWYKNVG) are cytoplasmic.

This sequence belongs to the RLP family. As to quaternary structure, interacts with an 11 kDa glycine-rich protein (GRP) of C.reflexa. Interacts with SOBIR1 and SOBIR1-like kinases; presence or absence of GRP has no effect on interaction.

The protein localises to the cell membrane. Its subcellular location is the cell surface. Its function is as follows. Involved in plant defense. Contributes to resistance against parasitic plant C.reflexa. Acts as a receptor for the 11 kDa glycine-rich protein (GRP) of C.reflexa inducing immune responses such as emission of stress-related phytohormone ethylene, reactive oxygen species (ROS) release, and hypersensitive cell death. Recognizes a specific pathogen-associated molecular pattern (PAMP), a cysteine-rich peptide 21 (crip21), from GRP located on the cell wall of C.reflexa. The sequence is that of Cuscuta receptor 1 from Solanum lycopersicum (Tomato).